A 110-amino-acid chain; its full sequence is Coiled-coil-helix-coiled-coil-helix domain-containing protein 5 (110 aa).

The residue at position 1 (Met-1) is an N-acetylmethionine. CHCH domains are found at residues Ala-9–Arg-52 and Arg-55–Arg-97. 4 consecutive short sequence motifs (cx9C motif) follow at residues Cys-12–Cys-22, Cys-34–Cys-44, Cys-58–Cys-68, and Cys-79–Cys-89. Intrachain disulfides connect Cys-12–Cys-44, Cys-22–Cys-34, Cys-58–Cys-89, and Cys-68–Cys-79.

Monomer.

The protein resides in the mitochondrion intermembrane space. This chain is Coiled-coil-helix-coiled-coil-helix domain-containing protein 5 (CHCHD5), found in Homo sapiens (Human).